The chain runs to 165 residues: Adenosine 5'-monophosphoramidase HINT3 (165 aa).

Residues 1–23 (MAEKQAGLVGEPDPEGSSPGTSE) form a disordered region. Alanine 2 carries the N-acetylalanine modification. One can recognise an HIT domain in the interval 32-143 (VFCRVAAGQE…PVKEFGFLSK (112 aa)). Residues 59-60 (DI) and 128-130 (HLH) each bind AMP. The short motif at 126-130 (HLHLH) is the Histidine triad motif element. Histidine 128 serves as the catalytic Tele-AMP-histidine intermediate.

This sequence belongs to the HINT family. Forms dimers to octamers and even larger oligomer. Interacts with CALM1.

The protein localises to the cytoplasm. The protein resides in the nucleus. It carries out the reaction adenosine 5'-phosphoramidate + H2O = AMP + NH4(+). Exhibits adenosine 5'-monophosphoramidase activity, hydrolyzing purine nucleotide phosphoramidates with a single phosphate group such as adenosine 5'monophosphoramidate (AMP-NH2) to yield AMP and NH2. Hydrolyzes lysyl-AMP (AMP-N-epsilon-(N-alpha-acetyl lysine methyl ester)) generated by lysine tRNA ligase. In Mus musculus (Mouse), this protein is Adenosine 5'-monophosphoramidase HINT3 (Hint3).